The sequence spans 522 residues: MEELQGYFEKDRSRQQPFLYPLLFQEYIYALAHDRGLNRNGSIFYEPLEVFGYDSKSSLALVKRLITRIYQQHFFLSSVNDSNQNKFVGHHHTNFFYSRFYSQMISEGFTIIVEIPFSLQLVSYFKEKEIQKSHNLRSIHSIFPFLEDKLLHLNYVSDILIPHPIHMEILVQILQCWIQDVPLLHFLRFFLHEYNNWNSFFITQNKSIYLFSKETKRLFRFLYNSYVYECEFLFVFLRKHSSYLRFTSFRTFLERRYFYGKMEHLQTEHLIIVCCDXFNGTLWSFKDPFMHYARCQGKAILVSKGTHLLMKKWKYNFVNLWQYYFHFWYQSYRIHINQLSKHSFHFXGYFSSLLKNSSTVRNKMLDNSFLIDTLTTKFDTAVPVIFLIVSLSKAQFCTVSGHPISKPIWTDLSDSGIIERFGRICRNLSHYHSGSSKKQGLYRIKYILRLSCARTLAGKHKSTVRTFLQRLGSRLLEEFFTEGEQDLSLILPKAIPFPFQGSHRERIWYLDIIRINDLMNRL.

The protein belongs to the intron maturase 2 family. MatK subfamily.

The protein localises to the plastid. It localises to the chloroplast. Usually encoded in the trnK tRNA gene intron. Probably assists in splicing its own and other chloroplast group II introns. In Watsonia angusta, this protein is Maturase K.